Reading from the N-terminus, the 423-residue chain is WD repeat and SOCS box-containing protein 1 (423 aa).

Residues 76-100 form a disordered region; the sequence is DRSSGAGPRRLSRQNSEGSLLPGEP. WD repeat units follow at residues 125–166, 169–209, 213–252, 255–294, and 310–347; these read SRCV…LLLN, DHTD…NMVK, GHQN…LIRK, GHHN…VLLE, and ANDR…KSPQ. An SOCS box domain is found at 373 to 423; that stretch reads DGSVHFWASPRSIASLQHLCRMTLRRVMPTQQVYTLPIPFSMQDYLAYKTL.

In terms of assembly, component of a probable ECS E3 ubiquitin-protein ligase complex that contains the Elongin BC complex.

It functions in the pathway protein modification; protein ubiquitination. In terms of biological role, probable substrate-recognition component of a SCF-like ECS (Elongin-Cullin-SOCS-box protein) E3 ubiquitin-protein ligase complex which mediates the ubiquitination and subsequent proteasomal degradation of target proteins. This is WD repeat and SOCS box-containing protein 1 (wsb1) from Danio rerio (Zebrafish).